A 158-amino-acid polypeptide reads, in one-letter code: SsrA-binding protein (158 aa).

Basic and acidic residues predominate over residues 133–147; sequence KRQALRERQDNREAQ. The segment at 133–158 is disordered; sequence KRQALRERQDNREAQRAMASRKHLGE.

Belongs to the SmpB family.

Its subcellular location is the cytoplasm. Its function is as follows. Required for rescue of stalled ribosomes mediated by trans-translation. Binds to transfer-messenger RNA (tmRNA), required for stable association of tmRNA with ribosomes. tmRNA and SmpB together mimic tRNA shape, replacing the anticodon stem-loop with SmpB. tmRNA is encoded by the ssrA gene; the 2 termini fold to resemble tRNA(Ala) and it encodes a 'tag peptide', a short internal open reading frame. During trans-translation Ala-aminoacylated tmRNA acts like a tRNA, entering the A-site of stalled ribosomes, displacing the stalled mRNA. The ribosome then switches to translate the ORF on the tmRNA; the nascent peptide is terminated with the 'tag peptide' encoded by the tmRNA and targeted for degradation. The ribosome is freed to recommence translation, which seems to be the essential function of trans-translation. The sequence is that of SsrA-binding protein from Leifsonia xyli subsp. xyli (strain CTCB07).